An 86-amino-acid chain; its full sequence is F(1)-ATPase inhibitor STF1, mitochondrial (86 aa).

The N-terminal 23 residues, 1–23 (MLNRCISRNTRLPVNLRIASRFY), are a transit peptide targeting the mitochondrion. Serine 24 carries the post-translational modification Phosphoserine.

The protein belongs to the ATPase inhibitor family. As to quaternary structure, monomer and homodimer. Monomeric at pH 5.0 and dimeric at either pH 6.5 or 8.0. The protein aggregates increasingly strongly with increasing pH.

The protein resides in the mitochondrion. Its function is as follows. Endogenous low-affinity ATPase inhibitor, which inhibits specifically the reverse ATPase reaction of mitochondrial F(1)F(0)-type ATP synthase. Found to stabilize, together with STF2, a complex of intrinsic ATPase inhibitor INH1 and proton-translocating ATPase in mitochondrial membranes. Binds directly to purified F1-ATPase. In Saccharomyces cerevisiae (strain ATCC 204508 / S288c) (Baker's yeast), this protein is F(1)-ATPase inhibitor STF1, mitochondrial (STF1).